The sequence spans 191 residues: Pyridoxal 5'-phosphate synthase subunit PdxT (191 aa).

An L-glutamine-binding site is contributed by 52–54; it reads GES. Catalysis depends on Cys-81, which acts as the Nucleophile. L-glutamine contacts are provided by residues Arg-108 and 136–137; that span reads IR. Residues His-172 and Glu-174 each act as charge relay system in the active site.

This sequence belongs to the glutaminase PdxT/SNO family. In terms of assembly, in the presence of PdxS, forms a dodecamer of heterodimers. Only shows activity in the heterodimer.

The enzyme catalyses aldehydo-D-ribose 5-phosphate + D-glyceraldehyde 3-phosphate + L-glutamine = pyridoxal 5'-phosphate + L-glutamate + phosphate + 3 H2O + H(+). It catalyses the reaction L-glutamine + H2O = L-glutamate + NH4(+). Its pathway is cofactor biosynthesis; pyridoxal 5'-phosphate biosynthesis. Catalyzes the hydrolysis of glutamine to glutamate and ammonia as part of the biosynthesis of pyridoxal 5'-phosphate. The resulting ammonia molecule is channeled to the active site of PdxS. This is Pyridoxal 5'-phosphate synthase subunit PdxT from Actinobacillus pleuropneumoniae serotype 7 (strain AP76).